The following is a 747-amino-acid chain: Flowering time control protein FCA (747 aa).

The disordered stretch occupies residues 80–101; it reads YSVRPTTPPVQQPLSGQKRGYP. RRM domains lie at 120–201 and 211–291; these read VKLF…YADG and FKLF…FAEP. The segment covering 291-301 has biased composition (basic and acidic residues); that stretch reads PKRPKPGESRE. A disordered region spans residues 291 to 503; sequence PKRPKPGESR…QQPLQKMQHP (213 aa). 2 stretches are compositionally biased toward polar residues: residues 320–353 and 395–406; these read RPTS…SNTG and SSSATLQQQNRA. A compositionally biased stretch (low complexity) spans 448 to 460; that stretch reads SSQLPTSQLPPQQ. The span at 461 to 498 shows a compositional bias: polar residues; it reads NISRATAPQTPLNINLRPTTVSSATVQFPPRSQQQPLQ. Residues 591 to 624 form the WW domain; sequence GSVKCTWTEHTSPDGFKYYYNGLTGESKWEKPEE. Positions 630–641 are enriched in basic and acidic residues; sequence REQQKQQQHQEK. Disordered regions lie at residues 630–707 and 722–747; these read REQQ…SGIG and AASM…KNKA. The span at 642–673 shows a compositional bias: low complexity; sequence PTIQQSQTQLQPLQQQPQQVQQQYQGQQLQQP. Polar residues-rich tracts occupy residues 674–707 and 726–739; these read FYSS…SGIG and NDIS…QSPQ.

In terms of assembly, interacts (via C-terminus) with SWI3B and (via WW domain) with FY (via PPLPP motifs). Constitutively expressed, but the negative feedback maintains the active isoform a low level throughout much of the plant, except in meristematic cells at a specific time in development.

The protein localises to the nucleus. Its function is as follows. Plays a major role in the promotion of the transition of the vegetative meristem to reproductive development. Plays a role in the regulation of flowering time in the autonomous flowering pathway by decreasing FLOWERING LOCUS C mRNA levels. Required for RNA-mediated chromatin silencing of a range of loci in the genome. Cotranscriptionally recognizes aberrant RNA and marks it for silencing. Controls alternative cleavage and polyadenylation on pre-mRNAs and antisense RNAs. Acts redundantly with FPA to prevent the expression of distally polyadenylated antisense RNAs at the FLC locus. The sequence is that of Flowering time control protein FCA (FCA) from Arabidopsis thaliana (Mouse-ear cress).